The primary structure comprises 1292 residues: ABC multidrug transporter MDR5 (1292 aa).

Residues 1-43 (MTEEPKPVTPVLRDGEAGLDTTAPTEAGSLGEEAPKKEADGIV) are disordered. Helical transmembrane passes span 79–99 (ICGF…TIIF) and 128–148 (LWFV…TICF). The ABC transmembrane type-1 1 domain occupies 81-370 (GFFAAVASGT…IAPTLGEFTK (290 aa)). Asparagine 149 is a glycosylation site (N-linked (GlcNAc...) asparagine). 4 helical membrane-spanning segments follow: residues 202-222 (VGTC…AFTQ), 226-246 (LTLP…ITVA), 314-334 (EFFI…KLLL), and 344-364 (ILTV…IAPT). One can recognise an ABC transporter 1 domain in the interval 405-650 (LELSNAVFSY…KGQYWSLVNA (246 aa)). An ATP-binding site is contributed by 440-447 (GASGSGKS). N-linked (GlcNAc...) asparagine glycosylation occurs at asparagine 494. A disordered region spans residues 656–691 (ASDDSSSDTDKETDTQPAEILEKHATTKSTHSKVPH). The segment covering 663 to 680 (DTDKETDTQPAEILEKHA) has biased composition (basic and acidic residues). 2 helical membrane-spanning segments follow: residues 720 to 740 (HWLF…AFPA) and 768 to 788 (LMFF…GFFL). Residues 725–1012 (LLGGIASVVS…IFGFTMNTTK (288 aa)) enclose the ABC transmembrane type-1 2 domain. Asparagine 820 carries an N-linked (GlcNAc...) asparagine glycan. 4 helical membrane passes run 844–864 (IGLI…ALVT), 866–886 (WKLA…AGFI), 949–969 (IAMI…ALAF), and 986–1006 (FFVI…IFGF). Asparagine 1009, asparagine 1031, and asparagine 1052 each carry an N-linked (GlcNAc...) asparagine glycan. The 238-residue stretch at 1048-1285 (VEFRNVSFSY…KGRYFEMCKA (238 aa)) folds into the ABC transporter 2 domain. ATP is bound at residue 1083–1090 (GPSGCGKT).

Belongs to the ABC transporter superfamily. ABCB family. Multidrug resistance exporter (TC 3.A.1.201) subfamily.

It is found in the cell membrane. It carries out the reaction itraconazole(in) + ATP + H2O = itraconazole(out) + ADP + phosphate + H(+). Functionally, pleiotropic ABC efflux transporter involved in the modulation susceptibility to itraconazole. The chain is ABC multidrug transporter MDR5 from Trichophyton rubrum (strain ATCC MYA-4607 / CBS 118892) (Athlete's foot fungus).